Consider the following 389-residue polypeptide: Chalcone synthase 6 (389 aa).

Residue C164 is part of the active site.

This sequence belongs to the thiolase-like superfamily. Chalcone/stilbene synthases family.

The catalysed reaction is (E)-4-coumaroyl-CoA + 3 malonyl-CoA + 3 H(+) = 2',4,4',6'-tetrahydroxychalcone + 3 CO2 + 4 CoA. It participates in secondary metabolite biosynthesis; flavonoid biosynthesis. The primary product of this enzyme is 4,2',4',6'-tetrahydroxychalcone (also termed naringenin-chalcone or chalcone) which can under specific conditions spontaneously isomerize into naringenin. The chain is Chalcone synthase 6 (CHS6) from Pisum sativum (Garden pea).